The following is a 216-amino-acid chain: Ribosomal RNA large subunit methyltransferase E (216 aa).

Positions 60, 62, 80, 96, and 121 each coordinate S-adenosyl-L-methionine. Lys-161 serves as the catalytic Proton acceptor.

It belongs to the class I-like SAM-binding methyltransferase superfamily. RNA methyltransferase RlmE family.

It is found in the cytoplasm. It carries out the reaction uridine(2552) in 23S rRNA + S-adenosyl-L-methionine = 2'-O-methyluridine(2552) in 23S rRNA + S-adenosyl-L-homocysteine + H(+). Its function is as follows. Specifically methylates the uridine in position 2552 of 23S rRNA at the 2'-O position of the ribose in the fully assembled 50S ribosomal subunit. The sequence is that of Ribosomal RNA large subunit methyltransferase E from Pseudomonas savastanoi pv. phaseolicola (strain 1448A / Race 6) (Pseudomonas syringae pv. phaseolicola (strain 1448A / Race 6)).